A 980-amino-acid chain; its full sequence is Exportin-T (980 aa).

This sequence belongs to the exportin family. In terms of tissue distribution, expressed in roots, stems, leaves, flowers and embryos.

It is found in the nucleus. It localises to the cytoplasm. Probable tRNA nucleus export receptor which regulates tRNA processing and facilitates tRNA translocation across the nuclear pore complex. Is required for correct leaf initiation at different developmental stages and may play a role in floral patterning. The chain is Exportin-T from Oryza sativa subsp. japonica (Rice).